We begin with the raw amino-acid sequence, 232 residues long: Myb-related protein 308 (232 aa).

2 HTH myb-type domains span residues 9–61 (KAHT…INYL) and 62–116 (RPDL…RRKL). 2 DNA-binding regions (H-T-H motif) span residues 37–61 (WRSLPKAAGLLRCGKSCRLRWINYL) and 89–112 (WSLIAGRLPGRTDNEIKNYWNTHI).

In terms of tissue distribution, expressed in roots, stems, leaves, seed pods and flowers.

It localises to the nucleus. Transcription factor. This is Myb-related protein 308 from Antirrhinum majus (Garden snapdragon).